Reading from the N-terminus, the 1390-residue chain is DNA-directed RNA polymerase subunit beta (1390 aa).

This sequence belongs to the RNA polymerase beta chain family. In terms of assembly, the RNAP catalytic core consists of 2 alpha, 1 beta, 1 beta' and 1 omega subunit. When a sigma factor is associated with the core the holoenzyme is formed, which can initiate transcription.

It carries out the reaction RNA(n) + a ribonucleoside 5'-triphosphate = RNA(n+1) + diphosphate. In terms of biological role, DNA-dependent RNA polymerase catalyzes the transcription of DNA into RNA using the four ribonucleoside triphosphates as substrates. This is DNA-directed RNA polymerase subunit beta from Methylobacillus flagellatus (strain ATCC 51484 / DSM 6875 / VKM B-1610 / KT).